We begin with the raw amino-acid sequence, 222 residues long: Cytochrome b6-f complex iron-sulfur subunit, chloroplastic (222 aa).

The transit peptide at 1–49 (MASTALSTASNPTQLCRTRASSLCKPVKGLGFGRERIPRNITCMAGSIS) directs the protein to the chloroplast. Residues 66-86 (LLGAISLPTFGMLVPYGSFLV) traverse the membrane as a helical segment. A Rieske domain is found at 109-205 (VEDWLKTHGP…ADVDDGKVVF (97 aa)). Residues Cys151, His153, Cys169, and His172 each contribute to the [2Fe-2S] cluster site. Cys156 and Cys171 are oxidised to a cystine.

It belongs to the Rieske iron-sulfur protein family. In terms of assembly, the 4 large subunits of the cytochrome b6-f complex are cytochrome b6, subunit IV (17 kDa polypeptide, petD), cytochrome f and the Rieske protein, while the 4 small subunits are petG, petL, petM and petN. The complex functions as a dimer. The cofactor is [2Fe-2S] cluster.

It localises to the plastid. Its subcellular location is the chloroplast thylakoid membrane. It catalyses the reaction 2 oxidized [plastocyanin] + a plastoquinol + 2 H(+)(in) = 2 reduced [plastocyanin] + a plastoquinone + 4 H(+)(out). Its function is as follows. Component of the cytochrome b6-f complex, which mediates electron transfer between photosystem II (PSII) and photosystem I (PSI), cyclic electron flow around PSI, and state transitions. The sequence is that of Cytochrome b6-f complex iron-sulfur subunit, chloroplastic (petC) from Triticum aestivum (Wheat).